We begin with the raw amino-acid sequence, 280 residues long: 2,3,4,5-tetrahydropyridine-2,6-dicarboxylate N-succinyltransferase (280 aa).

It belongs to the transferase hexapeptide repeat family.

It is found in the cytoplasm. It carries out the reaction (S)-2,3,4,5-tetrahydrodipicolinate + succinyl-CoA + H2O = (S)-2-succinylamino-6-oxoheptanedioate + CoA. It participates in amino-acid biosynthesis; L-lysine biosynthesis via DAP pathway; LL-2,6-diaminopimelate from (S)-tetrahydrodipicolinate (succinylase route): step 1/3. This is 2,3,4,5-tetrahydropyridine-2,6-dicarboxylate N-succinyltransferase from Methylorubrum extorquens (strain PA1) (Methylobacterium extorquens).